Consider the following 373-residue polypeptide: L-threonine 3-dehydrogenase, mitochondrial (373 aa).

NAD(+)-binding positions include 62–67 (GGLGQL), 88–90 (DIR), 106–107 (NI), Tyr195, Lys199, and Ile225. The active-site Proton donor/acceptor is Tyr195.

This sequence belongs to the NAD(P)-dependent epimerase/dehydratase family. As to quaternary structure, homodimer.

Its subcellular location is the mitochondrion. The enzyme catalyses L-threonine + NAD(+) = (2S)-2-amino-3-oxobutanoate + NADH + H(+). It participates in amino-acid degradation; L-threonine degradation via oxydo-reductase pathway; glycine from L-threonine: step 1/2. Its function is as follows. Catalyzes the NAD(+)-dependent oxidation of L-threonine to 2-amino-3-ketobutyrate, mediating L-threonine catabolism. This chain is L-threonine 3-dehydrogenase, mitochondrial, found in Mus musculus (Mouse).